Consider the following 108-residue polypeptide: Large ribosomal subunit protein uL24 (108 aa).

It belongs to the universal ribosomal protein uL24 family. In terms of assembly, part of the 50S ribosomal subunit.

In terms of biological role, one of two assembly initiator proteins, it binds directly to the 5'-end of the 23S rRNA, where it nucleates assembly of the 50S subunit. One of the proteins that surrounds the polypeptide exit tunnel on the outside of the subunit. In Mycoplasma mycoides subsp. mycoides SC (strain CCUG 32753 / NCTC 10114 / PG1), this protein is Large ribosomal subunit protein uL24.